Here is a 375-residue protein sequence, read N- to C-terminus: Superinfection exclusion protein (375 aa).

The N-terminal stretch at 1–15 is a signal peptide; that stretch reads MIALLILSLACSVSA.

Belongs to the serpin family. Orthopoxvirus OPG040 subfamily. As to quaternary structure, interacts with OPG185/A56 protein.

The protein localises to the virion membrane. It is found in the host cell membrane. In terms of biological role, negatively regulates superinfection and syncytium formation in infected host cells. Acts in concert with OPG185/A56 protein at the host cell membrane by interacting with and inhibiting the mature virion entry/fusion complex (EFC). This mechanism ensures that new virions released from the cell cannot enter already infected cells. This chain is Superinfection exclusion protein (OPG040), found in Cynomys gunnisoni (Gunnison's prairie dog).